The sequence spans 164 residues: MKRAVYAGSFDPVTNGHLWMIREAVELFDELIVAVGVNPDKHCTFSVDERVALLREVTSGFSKLRVDVFENQFLVNYAQSVGANYIVRGIRTASDYEYERTMRYINSDLHPDITTLFLLPPREYAEVSSTMVKGLIGPRGWEGVIRQYLPEPVYRKMLSMYSEQ.

Ser-9 lines the substrate pocket. ATP is bound by residues 9 to 10 (SF) and His-17. Substrate is bound by residues Lys-41, Leu-74, and Arg-88. Residues 89 to 91 (GIR), Glu-99, and 124 to 130 (YAEVSST) each bind ATP.

The protein belongs to the bacterial CoaD family. In terms of assembly, homohexamer. Mg(2+) serves as cofactor.

The protein localises to the cytoplasm. It carries out the reaction (R)-4'-phosphopantetheine + ATP + H(+) = 3'-dephospho-CoA + diphosphate. It participates in cofactor biosynthesis; coenzyme A biosynthesis; CoA from (R)-pantothenate: step 4/5. Reversibly transfers an adenylyl group from ATP to 4'-phosphopantetheine, yielding dephospho-CoA (dPCoA) and pyrophosphate. This chain is Phosphopantetheine adenylyltransferase, found in Chromobacterium violaceum (strain ATCC 12472 / DSM 30191 / JCM 1249 / CCUG 213 / NBRC 12614 / NCIMB 9131 / NCTC 9757 / MK).